A 225-amino-acid polypeptide reads, in one-letter code: Phosphoribosylformylglycinamidine synthase subunit PurQ (225 aa).

The region spanning 5-225 (SAVITFPGSN…ESVVRGLVEA (221 aa)) is the Glutamine amidotransferase type-1 domain. The active-site Nucleophile is cysteine 89. Active-site residues include histidine 197 and glutamate 199.

In terms of assembly, part of the FGAM synthase complex composed of 1 PurL, 1 PurQ and 2 PurS subunits.

It localises to the cytoplasm. The enzyme catalyses N(2)-formyl-N(1)-(5-phospho-beta-D-ribosyl)glycinamide + L-glutamine + ATP + H2O = 2-formamido-N(1)-(5-O-phospho-beta-D-ribosyl)acetamidine + L-glutamate + ADP + phosphate + H(+). It carries out the reaction L-glutamine + H2O = L-glutamate + NH4(+). The protein operates within purine metabolism; IMP biosynthesis via de novo pathway; 5-amino-1-(5-phospho-D-ribosyl)imidazole from N(2)-formyl-N(1)-(5-phospho-D-ribosyl)glycinamide: step 1/2. Part of the phosphoribosylformylglycinamidine synthase complex involved in the purines biosynthetic pathway. Catalyzes the ATP-dependent conversion of formylglycinamide ribonucleotide (FGAR) and glutamine to yield formylglycinamidine ribonucleotide (FGAM) and glutamate. The FGAM synthase complex is composed of three subunits. PurQ produces an ammonia molecule by converting glutamine to glutamate. PurL transfers the ammonia molecule to FGAR to form FGAM in an ATP-dependent manner. PurS interacts with PurQ and PurL and is thought to assist in the transfer of the ammonia molecule from PurQ to PurL. In Novosphingobium aromaticivorans (strain ATCC 700278 / DSM 12444 / CCUG 56034 / CIP 105152 / NBRC 16084 / F199), this protein is Phosphoribosylformylglycinamidine synthase subunit PurQ.